The sequence spans 260 residues: Snake venom serine protease homolog (260 aa).

An N-terminal signal peptide occupies residues 1-18 (MVLVRVLANLLMLQLSYA). A propeptide spanning residues 19–24 (QKSSEL) is cleaved from the precursor. One can recognise a Peptidase S1 domain in the interval 25–251 (IIGGDECNIN…HLDWIKSIIA (227 aa)). 6 cysteine pairs are disulfide-bonded: C31-C165, C52-C68, C100-C258, C144-C212, C176-C191, and C202-C227. D112 (charge relay system) is an active-site residue. N-linked (GlcNAc...) asparagine glycosylation is found at N123 and N124. S206 serves as the catalytic Charge relay system.

Belongs to the peptidase S1 family. Snake venom subfamily. Expressed by the venom gland.

It localises to the secreted. In terms of biological role, snake venom serine protease homolog. May act in the hemostasis system of the prey. In Protobothrops jerdonii (Jerdon's pitviper), this protein is Snake venom serine protease homolog.